A 364-amino-acid polypeptide reads, in one-letter code: 3-isopropylmalate dehydrogenase (364 aa).

NAD(+) is bound at residue 77–90; the sequence is GPKWDNLPTDKRPE. Residues Arg-97, Arg-107, Arg-135, and Asp-224 each coordinate substrate. Asp-224, Asp-248, and Asp-252 together coordinate Mg(2+). 281 to 293 contacts NAD(+); that stretch reads GSAPDIAGKGIAN.

This sequence belongs to the isocitrate and isopropylmalate dehydrogenases family. LeuB type 1 subfamily. Homodimer. The cofactor is Mg(2+). Mn(2+) serves as cofactor.

Its subcellular location is the cytoplasm. It catalyses the reaction (2R,3S)-3-isopropylmalate + NAD(+) = 4-methyl-2-oxopentanoate + CO2 + NADH. It functions in the pathway amino-acid biosynthesis; L-leucine biosynthesis; L-leucine from 3-methyl-2-oxobutanoate: step 3/4. Catalyzes the oxidation of 3-carboxy-2-hydroxy-4-methylpentanoate (3-isopropylmalate) to 3-carboxy-4-methyl-2-oxopentanoate. The product decarboxylates to 4-methyl-2 oxopentanoate. The polypeptide is 3-isopropylmalate dehydrogenase (leuB) (Aquifex aeolicus (strain VF5)).